The sequence spans 373 residues: Extensin-1 (373 aa).

A signal peptide spans 1–19 (MASFLVLAFSLAFVSQTTA). 36 repeat units span residues 25–33 (SPPPPVKHY), 34–40 (SPPPVYK), 41–49 (SPPPPVKHY), 50–56 (SPPPVYK), 57–65 (SPPPPVKHY), 66–72 (SPPPVYK), 73–81 (SPPPPVKYY), 82–88 (SPPPVYK), 97–105 (SPPPPVKHY), 106–112 (SPPPVYK), 113–121 (SPPPPVKHY), 122–128 (SPPPVYK), 129–137 (SPPPPVKHY), 138–144 (SPPPVYK), 145–153 (SPPPPVKHY), 154–160 (SPPPVYK), 161–169 (SPPPPVKYY), 170–176 (SPPPVYK), 177–185 (SPPPPVKHY), 186–192 (SPPPVYK), 193–201 (SPPPPVKYY), 202–208 (SPPPVYK), 209–217 (SPPPPVKHY), 218–224 (SPPPVYK), 225–233 (SPPPPVKYY), 234–240 (SPPPVYK), 241–248 (SPPPPVHY), 249–256 (SPPPVVYH), 257–264 (SPPPPVHY), 265–272 (SPPPVVYH), 273–280 (SPPPPVHY), 281–288 (SPPPVVYH), 289–296 (SPPPPVHY), 297–304 (SPPPVVYH), 305–312 (SPPPPVHY), and 313–320 (SPPPVVYH). Residues 25–233 (SPPPPVKHYS…KSPPPPVKYY (209 aa)) are 13 X 9 AA repeats of S-P-P-P-P-V-K-[HY]-Y. A 13 X 7 AA repeats of S-P-P-P-V-Y-K region spans residues 34 to 240 (SPPPVYKSPP…KYYSPPPVYK (207 aa)). Positions 241–312 (SPPPPVHYSP…YHSPPPPVHY (72 aa)) are 5 X 8 AA repeats of S-P-P-P-P-V-H-Y. The 5 X 8 AA repeats of S-P-P-P-V-V-Y-H stretch occupies residues 249-320 (SPPPVVYHSP…HYSPPPVVYH (72 aa)). 2 isodityrosine cross-linking regions span residues 329-332 (YEYK) and 363-366 (YLYK). The interval 349–373 (PPPPVHHYSPPHQPYLYKSPPPPHY) is disordered.

It belongs to the extensin family. In terms of processing, extensins contain a characteristic repeat of the pentapeptide Ser-Pro(4). For this particular extensin, a typical repeat of Ser-Pro(3) is found. In both cases, the proline residues are hydroxylated and then O-glycosylated (arabinosylation). Synthetised as soluble proteins which become insolubilised in the cell wall through the intermolecular cross-linking of Tyr on adjacent monomers. Isodityrosine (IDT) stabilizes and makes rigid the part of the polypeptide where IDT functional sites are present. As to expression, predominantly expressed in the roots. Not detected in the leaves, nor in flowers or flower buds. Wounding reverses this pattern, turning on the gene in the leaves and repressing it in the roots.

The protein resides in the secreted. Its subcellular location is the primary cell wall. In terms of biological role, structural component which strengthens the primary cell wall. The sequence is that of Extensin-1 from Arabidopsis thaliana (Mouse-ear cress).